The sequence spans 586 residues: MKQSVSAEQIELKSSLPGSKKVYVDGPREGMKVPMREIEQSETNGVPNPPIRVYDTSGPYTDPEYKVELEKGIPTPRHSWIMGRGDVEAYEGREVKPEDDGVKVASKHTPVFPQMDRQPLRAKQGANVTQMHYARNGIITSEMEYVAIREGVEPEFVRKEIAEGRAILPANINHPEAEPMIIGRNFHVKVNANIGNSAVSSSIAEEVEKMTWATRWGADTIMDLSTGKNIHTTREWIIRNAPVPVGTVPIYQALEKVNGIAEDLTWEVYRDTLIEQAEQGVDYFTIHAGVLLRYIPITAKRTTGIVSRGGSIMAQWCLFHHKENFLYTHFEEICEIMKQYDVSFSLGDGLRPGSIADANDEAQFSELETLGELTKIAWKHDVQVMIEGPGHVPMHLIKENMEKELDICQGAPFYTLGPLTTDIAPGYDHITSAIGAAMIGWFGTAMLCYVTPKEHLGLPNKDDVRTGVITYKIAAHAADLAKGHKTAHQRDDALSKARFEFRWRDQFNLSLDPERAMEYHDETLPAEGAKTAHFCSMCGPKFCSMRISHDIREYAKENDLETTEAIEKGMKEKAEEFKEAGSHLYQ.

The segment at 1 to 33 (MKQSVSAEQIELKSSLPGSKKVYVDGPREGMKV) is disordered. A compositionally biased stretch (basic and acidic residues) spans 22–33 (VYVDGPREGMKV). Substrate contacts are provided by residues N193, M222, Y251, H287, 307–309 (SRG), 348–351 (DGLR), and E387. Residue H391 participates in Zn(2+) binding. Y414 lines the substrate pocket. H455 contributes to the Zn(2+) binding site. The [4Fe-4S] cluster site is built by C535, C538, and C543.

It belongs to the ThiC family. Requires [4Fe-4S] cluster as cofactor.

It catalyses the reaction 5-amino-1-(5-phospho-beta-D-ribosyl)imidazole + S-adenosyl-L-methionine = 4-amino-2-methyl-5-(phosphooxymethyl)pyrimidine + CO + 5'-deoxyadenosine + formate + L-methionine + 3 H(+). The protein operates within cofactor biosynthesis; thiamine diphosphate biosynthesis. Catalyzes the synthesis of the hydroxymethylpyrimidine phosphate (HMP-P) moiety of thiamine from aminoimidazole ribotide (AIR) in a radical S-adenosyl-L-methionine (SAM)-dependent reaction. The sequence is that of Phosphomethylpyrimidine synthase from Bacillus cereus (strain B4264).